Reading from the N-terminus, the 446-residue chain is Alpha-galacturonidase (446 aa).

10–72 (IKIAYIGGGS…GRWRYEAVST (63 aa)) serves as a coordination point for NAD(+). Asn151 lines the substrate pocket. Cys173 contacts Mn(2+). His174 serves as the catalytic Proton donor. His210 provides a ligand contact to Mn(2+).

It belongs to the glycosyl hydrolase 4 family. In terms of assembly, homotetramer. NAD(+) serves as cofactor. Requires Mn(2+) as cofactor.

The enzyme catalyses [(1-&gt;4)-alpha-D-galacturonosyl](n) + H2O = alpha-D-galacturonate + [(1-&gt;4)-alpha-D-galacturonosyl](n-1). In terms of biological role, alpha-galacturonidase able to catalyze the hydrolysis of the chromogenic substrate p-nitrophenyl-alpha-D-galacturonic acid (pNPalphaGalUA), and of the probable natural substrate alpha-1,4-di-galacturonate (GalUA(2)). Can neither hydrolyze pNPbetaGalUA, nor the stereoisomeric pNPalphaGlcUA. Does not display alpha- or beta-glucosidase activity as it fails to hydrolyze melibiose, raffinose, lactose and the chromogenic analogs, pNPalphaGal and pNPbetaGal. Cannot use the following compounds as substrates: pNP-N-acetyl-alpha- and beta-D-galactosaminide, pNP-N-acetyl-alpha- and beta-D-glucosaminide, pNP-alpha-L- and beta-L-arabinopyranoside, pNP-alpha- and beta-D-glucuronide, pNP-alpha- and beta-D-glucopyranoside, pNP-alpha- and beta-D-glucopyranoside 6-phosphate, pNP-alpha-D-galactopyranoside 6-phosphate and oNP-beta-D-galactopyranoside 6-phosphate. This chain is Alpha-galacturonidase (lplD), found in Bacillus subtilis (strain 168).